A 240-amino-acid chain; its full sequence is Protein YIPF6 (240 aa).

Over 1-91 (MVVSHLNRTV…PKKSSALLRD (91 aa)) the chain is Cytoplasmic. A helical membrane pass occupies residues 92-112 (WDLWGPLLLCVTLALMLQGGS). Topologically, residues 113 to 125 (ADSEEDGRPQFAE) are lumenal. The chain crosses the membrane as a helical span at residues 126–146 (VFVIIWFGSVIITLNSKLLGG). Residues 147-149 (TIS) are Cytoplasmic-facing. A helical membrane pass occupies residues 150–170 (FFQSLCVLGYCILPLTVAMIV). Topologically, residues 171–172 (CR) are lumenal. The helical transmembrane segment at 173–193 (IVLLGGSGVVSFAVRLIVVTA) threads the bilayer. The Cytoplasmic portion of the chain corresponds to 194-215 (SFSWSTFASTAFLADSQPTNRK). Residues 216–236 (ALVVYPVFLFYFVIGWMILTF) form a helical membrane-spanning segment. Residues 237 to 240 (SPSH) are Lumenal-facing.

This sequence belongs to the YIP1 family.

The protein resides in the golgi apparatus membrane. The chain is Protein YIPF6 (yipf6) from Danio rerio (Zebrafish).